The following is a 351-amino-acid chain: Phosphoribosylformylglycinamidine cyclo-ligase (351 aa).

Belongs to the AIR synthase family.

The protein localises to the cytoplasm. The enzyme catalyses 2-formamido-N(1)-(5-O-phospho-beta-D-ribosyl)acetamidine + ATP = 5-amino-1-(5-phospho-beta-D-ribosyl)imidazole + ADP + phosphate + H(+). It participates in purine metabolism; IMP biosynthesis via de novo pathway; 5-amino-1-(5-phospho-D-ribosyl)imidazole from N(2)-formyl-N(1)-(5-phospho-D-ribosyl)glycinamide: step 2/2. This is Phosphoribosylformylglycinamidine cyclo-ligase from Oleidesulfovibrio alaskensis (strain ATCC BAA-1058 / DSM 17464 / G20) (Desulfovibrio alaskensis).